The chain runs to 179 residues: Large ribosomal subunit protein uL6 (179 aa).

It belongs to the universal ribosomal protein uL6 family. In terms of assembly, part of the 50S ribosomal subunit.

Its function is as follows. This protein binds to the 23S rRNA, and is important in its secondary structure. It is located near the subunit interface in the base of the L7/L12 stalk, and near the tRNA binding site of the peptidyltransferase center. This is Large ribosomal subunit protein uL6 from Treponema pallidum (strain Nichols).